We begin with the raw amino-acid sequence, 476 residues long: Doublesex- and mab-3-related transcription factor 3 (476 aa).

Positions 29-76 form a DNA-binding region, DM; it reads CARCRNHGVLSWLKGHKRYCRFKDCTCEKCILIIERQRVMAAQVALRR. 2 disordered regions span residues 89–130 and 147–195; these read DSLR…RPTA and GTLP…SKNC. The segment covering 102-121 has biased composition (low complexity); the sequence is DAAATAATASQSSPASQASQ. A compositionally biased stretch (polar residues) spans 165–174; it reads DSSSTDNTAE. The span at 176 to 185 shows a compositional bias: basic and acidic residues; the sequence is FSDKDTDQRS. The DMA domain maps to 255–290; that stretch reads RPPLEVLKKIFPNQKPTVLELILKGCGGDLVSAVEV. Polar residues predominate over residues 418-432; sequence NSTSVFRSSPVLSSR. A disordered region spans residues 418–476; sequence NSTSVFRSSPVLSSRTTEDPRISIPDDGCPIVTKQSIYTEDDYDERSDSSDSRILNTSS.

It belongs to the DMRT family. In terms of tissue distribution, expressed in the ventral spinal cord, in a restrical population of neurons migrating ventrically in the developing spinal cord at 11.5 dpc.

It is found in the nucleus. Functionally, probable transcription factor that plays a role in configuring the spinal circuits controlling stride in vertebrates. Involved in neuronal specification within specific subdivision of spinal cord neurons and in the development of a coordinated locomotor network controlling limb movements. May regulate transcription during sexual development. The sequence is that of Doublesex- and mab-3-related transcription factor 3 (Dmrt3) from Mus musculus (Mouse).